The following is a 203-amino-acid chain: Thymidylate kinase (203 aa).

14–21 (GGEGSGKS) serves as a coordination point for ATP.

Belongs to the thymidylate kinase family.

It carries out the reaction dTMP + ATP = dTDP + ADP. Functionally, phosphorylation of dTMP to form dTDP in both de novo and salvage pathways of dTTP synthesis. The polypeptide is Thymidylate kinase (Rickettsia canadensis (strain McKiel)).